A 435-amino-acid chain; its full sequence is Elongation factor 1-alpha (435 aa).

The region spanning 4 to 229 is the tr-type G domain; sequence KPHLNLIVIG…DMLEIPPKPV (226 aa). The G1 stretch occupies residues 13-20; that stretch reads GHVDHGKS. Residue 13–20 coordinates GTP; that stretch reads GHVDHGKS. A Mg(2+)-binding site is contributed by Ser20. The tract at residues 69–73 is G2; it reads GVTIN. A G3 region spans residues 90-93; sequence DAPG. GTP contacts are provided by residues 90–94 and 152–155; these read DAPGH and TKMD. Positions 152–155 are G4; it reads TKMD. The interval 193 to 195 is G5; sequence VSI.

It belongs to the TRAFAC class translation factor GTPase superfamily. Classic translation factor GTPase family. EF-Tu/EF-1A subfamily.

Its subcellular location is the cytoplasm. It carries out the reaction GTP + H2O = GDP + phosphate + H(+). In terms of biological role, GTP hydrolase that promotes the GTP-dependent binding of aminoacyl-tRNA to the A-site of ribosomes during protein biosynthesis. This Metallosphaera sedula (strain ATCC 51363 / DSM 5348 / JCM 9185 / NBRC 15509 / TH2) protein is Elongation factor 1-alpha.